Here is a 284-residue protein sequence, read N- to C-terminus: Elongation factor Ts (284 aa).

Residues 80 to 83 form an involved in Mg(2+) ion dislocation from EF-Tu region; it reads TDFV.

The protein belongs to the EF-Ts family.

The protein resides in the cytoplasm. Functionally, associates with the EF-Tu.GDP complex and induces the exchange of GDP to GTP. It remains bound to the aminoacyl-tRNA.EF-Tu.GTP complex up to the GTP hydrolysis stage on the ribosome. The chain is Elongation factor Ts from Neisseria gonorrhoeae (strain ATCC 700825 / FA 1090).